A 224-amino-acid polypeptide reads, in one-letter code: tRNA (guanine-N(7)-)-methyltransferase (224 aa).

Positions 54, 79, 106, and 129 each coordinate S-adenosyl-L-methionine. Asp-129 is a catalytic residue. Substrate-binding residues include Lys-133 and Asp-165.

This sequence belongs to the class I-like SAM-binding methyltransferase superfamily. TrmB family.

It carries out the reaction guanosine(46) in tRNA + S-adenosyl-L-methionine = N(7)-methylguanosine(46) in tRNA + S-adenosyl-L-homocysteine. The protein operates within tRNA modification; N(7)-methylguanine-tRNA biosynthesis. Its function is as follows. Catalyzes the formation of N(7)-methylguanine at position 46 (m7G46) in tRNA. In Chlamydia trachomatis serovar D (strain ATCC VR-885 / DSM 19411 / UW-3/Cx), this protein is tRNA (guanine-N(7)-)-methyltransferase.